The chain runs to 357 residues: Glucose-6-phosphatase catalytic subunit 1 (357 aa).

At 1–28 (MEKGMDVLHDFGIQSTHYLQVNYQDSQD) the chain is on the lumenal side. Residues 29–49 (WFILVSVIADLRNAFYVLFPI) traverse the membrane as a helical segment. The Cytoplasmic portion of the chain corresponds to 50–60 (WFHLREAVGIK). Residues 61–81 (LLWVAVIGDWLNLVFKWILFG) form a helical membrane-spanning segment. The Lumenal portion of the chain corresponds to 82-117 (QRPYWWVMDTDYYSNTSVPLIKQFPVTCETGPGSPS). Arg-83 provides a ligand contact to substrate. Asn-96 is a glycosylation site (N-linked (GlcNAc...) asparagine). The chain crosses the membrane as a helical span at residues 118 to 138 (GHAMGTAGVYYVMVTSTLSIF). Residue His-119 is the Proton donor of the active site. Over 139 to 147 (RGRKRPTYR) the chain is Cytoplasmic. The helical transmembrane segment at 148–168 (FRCLNILLWLGFWAVQLNVCL) threads the bilayer. The Lumenal segment spans residues 169–170 (SR). Position 170 (Arg-170) interacts with substrate. Residues 171 to 191 (IYLAAHFPHQVVAGVLSGIAV) traverse the membrane as a helical segment. The active-site Nucleophile is the His-176. Residues 192–209 (AETFRHIQSIYNASLKKY) are Cytoplasmic-facing. Residues 210 to 230 (FLITFFLFSFAIGFYLLLKGL) traverse the membrane as a helical segment. Topologically, residues 231 to 254 (GVDLLWTLEKARRWCERPEWVHID) are lumenal. Residues 255–275 (TTPFASLLKNVGTLFGLGVTL) traverse the membrane as a helical segment. Topologically, residues 276 to 291 (NSSMYRESCKGKLSKW) are cytoplasmic. Residues 292-312 (FPFRLSCIVVSLILLHLFDSL) form a helical membrane-spanning segment. Over 313–320 (KPPSQTEL) the chain is Lumenal. Residues 321-341 (IFYTLSFCKSAAVPLASVSLI) form a helical membrane-spanning segment. The Cytoplasmic portion of the chain corresponds to 342-357 (PYCLARVFDQPDKKSL). The short motif at 354–357 (KKSL) is the Prevents secretion from ER element.

The protein belongs to the glucose-6-phosphatase family.

The protein localises to the endoplasmic reticulum membrane. The catalysed reaction is D-glucose 6-phosphate + H2O = D-glucose + phosphate. Its pathway is carbohydrate biosynthesis; gluconeogenesis. Functionally, hydrolyzes glucose-6-phosphate to glucose in the endoplasmic reticulum. Forms with the glucose-6-phosphate transporter (SLC37A4/G6PT) the complex responsible for glucose production in the terminal step of glycogenolysis and gluconeogenesis. Hence, it is the key enzyme in homeostatic regulation of blood glucose levels. This Canis lupus familiaris (Dog) protein is Glucose-6-phosphatase catalytic subunit 1 (G6PC1).